Reading from the N-terminus, the 432-residue chain is Adenylosuccinate synthetase (432 aa).

Residues 12–18 (GDEGKGK) and 40–42 (GHT) contribute to the GTP site. The active-site Proton acceptor is Asp13. Residues Asp13 and Gly40 each coordinate Mg(2+). IMP is bound by residues 13-16 (DEGK), 38-41 (NAGH), Thr128, Arg142, Gln223, Thr238, and Arg302. Catalysis depends on His41, which acts as the Proton donor. 298–304 (TVTGRPR) is a binding site for substrate. Residues Arg304, 330–332 (LLD), and 412–414 (SVG) each bind GTP.

The protein belongs to the adenylosuccinate synthetase family. In terms of assembly, homodimer. Mg(2+) serves as cofactor.

It is found in the cytoplasm. The catalysed reaction is IMP + L-aspartate + GTP = N(6)-(1,2-dicarboxyethyl)-AMP + GDP + phosphate + 2 H(+). Its pathway is purine metabolism; AMP biosynthesis via de novo pathway; AMP from IMP: step 1/2. In terms of biological role, plays an important role in the de novo pathway of purine nucleotide biosynthesis. Catalyzes the first committed step in the biosynthesis of AMP from IMP. This Limosilactobacillus reuteri (strain DSM 20016) (Lactobacillus reuteri) protein is Adenylosuccinate synthetase.